We begin with the raw amino-acid sequence, 505 residues long: Pentatricopeptide repeat-containing protein At2g17033 (505 aa).

PPR repeat units follow at residues 243–277, 278–312, and 313–347; these read KTQA…KIKP, GLFE…GHKI, and DTVC…NVPF. In terms of domain architecture, Smr spans 413–503; the sequence is LDLHGMHLSS…AKGKTVKEWL (91 aa).

The protein belongs to the PPR family. P subfamily.

This is Pentatricopeptide repeat-containing protein At2g17033 from Arabidopsis thaliana (Mouse-ear cress).